The following is a 297-amino-acid chain: uncharacterized protein (297 aa).

Residues 1–44 (MQKSKSIFIPKAFAPQQQAQAPPSKLDNKDPSVEGEGASKPKDD) are disordered. Low complexity predominate over residues 10 to 23 (PKAFAPQQQAQAPP). Basic and acidic residues predominate over residues 26–44 (LDNKDPSVEGEGASKPKDD).

This is an uncharacterized protein from Invertebrate iridescent virus 3 (IIV-3).